The primary structure comprises 551 residues: Cytochrome P450 monooxygenase virE (551 aa).

A signal peptide spans 1–25; it reads MPKPWVVFGLGTLVLFLWRLNKIGR. Asn-392 is a glycosylation site (N-linked (GlcNAc...) asparagine). Heme is bound at residue Cys-439.

The protein belongs to the cytochrome P450 family. Heme serves as cofactor.

It functions in the pathway secondary metabolite biosynthesis. Its function is as follows. Cytochrome P450 monooxygenase; part of the gene cluster that mediates the biosynthesis of virensols and trichoxide, fungal natural products that contain or are derived from a salicylaldehyde core. The pathway begins with the synthesis of the reduced chain in virensol C by the highly reducing polyketide synthase virA via condensation of one acetate and 8 malonate units. VirA has interesting programming rules since the first 2 ketides are fully reduced, the 3 following ketides undergo beta-dehydration, and the last 3 ketides are only reduced to beta-hydroxys to yield the trihydroxy portion. The production of aldehyde virensol C by virA alone is surprising, since virA does not contain a reductase (R) domain that is typically associated with reductive product release in HRPKS. The cupin-domain enzyme virC is involved in enhancing virA product turnover. The short-chain dehydrogenase virB then oxidizes the C-7 alcohol of virensol C to a ketone, yielding virensol D. Virensol D is further transformed to salicylaldehyde 5-deoxyaurocitrin by the short-chain dehydrogenase virD. VirD catalyzes the dehydrogenation of C-3 to form the beta-ketone aldehyde, which is followed by the generation of the nucleophilic C-2 that is required for the intramolecular aldol condensation between C-2 and C-7, itself followed by dehydration and aromatization which leads to salicylaldehyde 5-deoxyaurocitrin. While the dehydrogenation of virensol D is definitely catalyzed by virD, the aldol condensation and dehydration may be uncatalyzed or assisted by virD. The short chain dehydrogenase virG then converts salicylaldehyde 5-deoxyaurocitrin into virensol B which is further hydroxylated by the cytochrome P450 monooxygenase virE to yield the hydroquinone virensol A. VirI then may oxidize virensol A to form the quinone, while virH performs the epoxidation. Finally, the two remaining short-chain dehydrogenases, virK and virL, are probably responsible for reducing the ketones to the corresponding alcohols to furnish the epoxycyclohexanol structure in trichoxide. The chain is Cytochrome P450 monooxygenase virE from Hypocrea virens (strain Gv29-8 / FGSC 10586) (Gliocladium virens).